The following is a 203-amino-acid chain: Cupin-domain-containing oxidoreductase fogC (203 aa).

Positions 105-171 are cupin-like domain; sequence DFAPGVESPL…GNGTLPGRML (67 aa).

The protein belongs to the virC family.

The protein operates within secondary metabolite biosynthesis. In terms of biological role, cupin-domain-containing oxidoreductase; part of the gene cluster that mediates the biosynthesis of flavoglaucin and congeners (including aspergin, dihydroauroglaucin and auroglaucin), prenylated salicylaldehyde derivatives carrying a saturated or an unsaturated C-7 side chain. The PKS fogA releases the carboxylic acid (8E,10E,12E)-3,5,7-trihydroxytetradeca-8,10,12-trienoic acid as its product, as well as derivatives with one and two double bonds. FogA is indeed able to reduce the initial triketide, thus being at least partially responsible for the differently saturated heptyl side chains of flavoglaucin congeners. The oxidoreductases fogB, fogC and fogD modify the nascent polyketide in fogA-bound form and, together, fogA, fogB, fogC and fogD are necessary for the formation of the aromatic core and the cyclized PKS products are released as salicyl alcohols. In particular, fogB is responsible for oxidation of a hydroxyl group or reduction of remaining double bond(s) at the C-7 residue whereas fogD is probably involved in the reductive release of the modified PKS products. The cytochrome P450 monooxygenase fogE is then responsible for the hydroxylation at C-3 of the benzene ring. The fogE products are substrates of the prenyltransferase fogH and the prenylated benzyl alcohols are subsequently oxidized by the fogF to produce the final aryl aldehydes flavoglaucin and congeners. The short-chain dehydrogenase fogG does not seem to be involved in the biosynthesis of the prenylated salicylaldehyde derivatives. In Aspergillus ruber (strain CBS 135680), this protein is Cupin-domain-containing oxidoreductase fogC.